Consider the following 338-residue polypeptide: Solute carrier family 35 member B1 homolog (338 aa).

9 consecutive transmembrane segments (helical) span residues 9 to 29 (FVIY…VQEK), 53 to 73 (LALV…LLTI), 84 to 104 (GSYV…NMAM), 111 to 131 (TAVV…VLIG), 135 to 155 (YSWT…LFMY), 168 to 188 (TLLG…TGAV), 213 to 233 (LMLG…YFTI), 244 to 264 (LIAV…ASFG), and 284 to 304 (VLLF…LVFA). A Di-lysine motif motif is present at residues 334-338 (KKLNS).

It belongs to the nucleotide-sugar transporter family. SLC35B subfamily.

The protein localises to the endoplasmic reticulum membrane. Probable sugar transporter. This is Solute carrier family 35 member B1 homolog (meigo) from Drosophila melanogaster (Fruit fly).